Here is a 351-residue protein sequence, read N- to C-terminus: UDP-N-acetylenolpyruvoylglucosamine reductase (351 aa).

The FAD-binding PCMH-type domain maps to 25 to 196 (HIQAQARWLL…AAVEFRLPLL (172 aa)). R173 is an active-site residue. S246 (proton donor) is an active-site residue. E343 is an active-site residue.

This sequence belongs to the MurB family. Requires FAD as cofactor.

The protein resides in the cytoplasm. It carries out the reaction UDP-N-acetyl-alpha-D-muramate + NADP(+) = UDP-N-acetyl-3-O-(1-carboxyvinyl)-alpha-D-glucosamine + NADPH + H(+). It functions in the pathway cell wall biogenesis; peptidoglycan biosynthesis. Functionally, cell wall formation. The sequence is that of UDP-N-acetylenolpyruvoylglucosamine reductase from Xylella fastidiosa (strain 9a5c).